The sequence spans 498 residues: Glycerol kinase (498 aa).

Residue T12 participates in ADP binding. ATP-binding residues include T12, T13, and S14. Sn-glycerol 3-phosphate is bound at residue T12. R16 lines the ADP pocket. The sn-glycerol 3-phosphate site is built by R82, E83, Y134, and D244. Residues R82, E83, Y134, D244, and Q245 each contribute to the glycerol site. Residues T266 and G310 each contribute to the ADP site. Residues T266, G310, Q314, and G411 each coordinate ATP. Residues G411 and N415 each coordinate ADP.

Belongs to the FGGY kinase family.

It carries out the reaction glycerol + ATP = sn-glycerol 3-phosphate + ADP + H(+). It functions in the pathway polyol metabolism; glycerol degradation via glycerol kinase pathway; sn-glycerol 3-phosphate from glycerol: step 1/1. Its activity is regulated as follows. Inhibited by fructose 1,6-bisphosphate (FBP). Functionally, key enzyme in the regulation of glycerol uptake and metabolism. Catalyzes the phosphorylation of glycerol to yield sn-glycerol 3-phosphate. The sequence is that of Glycerol kinase from Chloroflexus aurantiacus (strain ATCC 29366 / DSM 635 / J-10-fl).